We begin with the raw amino-acid sequence, 551 residues long: 2,3-bisphosphoglycerate-independent phosphoglycerate mutase (551 aa).

The Mn(2+) site is built by Asp-22 and Ser-74. Ser-74 (phosphoserine intermediate) is an active-site residue. Substrate-binding positions include His-135, 165–166, Arg-201, Arg-208, and 281–284; these read RD and RGDR. Mn(2+) is bound at residue Asp-319. Lys-356 is a binding site for substrate. 5 residues coordinate Mn(2+): Asp-424, His-428, Asp-465, His-466, and His-495.

This sequence belongs to the BPG-independent phosphoglycerate mutase family. Monomer. Mn(2+) serves as cofactor.

The protein resides in the cytoplasm. It carries out the reaction (2R)-2-phosphoglycerate = (2R)-3-phosphoglycerate. It participates in carbohydrate degradation; glycolysis; pyruvate from D-glyceraldehyde 3-phosphate: step 3/5. Its function is as follows. Catalyzes the interconversion of 2-phosphoglycerate (2-PGA) and 3-phosphoglycerate (3-PGA). This Trypanosoma brucei brucei (strain 927/4 GUTat10.1) protein is 2,3-bisphosphoglycerate-independent phosphoglycerate mutase.